The chain runs to 430 residues: Serine--tRNA ligase (430 aa).

Position 237–239 (237–239 (TAE)) interacts with L-serine. 268 to 270 (RSE) contributes to the ATP binding site. Position 291 (E291) interacts with L-serine. 355 to 358 (EISS) contributes to the ATP binding site. L-serine is bound at residue S391.

Belongs to the class-II aminoacyl-tRNA synthetase family. Type-1 seryl-tRNA synthetase subfamily. As to quaternary structure, homodimer. The tRNA molecule binds across the dimer.

The protein localises to the cytoplasm. It carries out the reaction tRNA(Ser) + L-serine + ATP = L-seryl-tRNA(Ser) + AMP + diphosphate + H(+). The enzyme catalyses tRNA(Sec) + L-serine + ATP = L-seryl-tRNA(Sec) + AMP + diphosphate + H(+). Its pathway is aminoacyl-tRNA biosynthesis; selenocysteinyl-tRNA(Sec) biosynthesis; L-seryl-tRNA(Sec) from L-serine and tRNA(Sec): step 1/1. Its function is as follows. Catalyzes the attachment of serine to tRNA(Ser). Is also able to aminoacylate tRNA(Sec) with serine, to form the misacylated tRNA L-seryl-tRNA(Sec), which will be further converted into selenocysteinyl-tRNA(Sec). This is Serine--tRNA ligase from Shigella boydii serotype 18 (strain CDC 3083-94 / BS512).